We begin with the raw amino-acid sequence, 390 residues long: MDRSQEHYANGDQNLEANLIDHEVVTESSSSAVPQTENYKRWLRVSIYVIFVLFCQPLATILGRLYYENGGNSTYVVTLLQLIGFPVLVLFRFFSRIRQPKSTDTNFSQSPSFTTLASVYLCTGLLVSAYAYLSAVGLLYLPVSTFSLILASQLAFTAFFSYFLNSQKFTPLIVSSLLLLTVSSALLVVNTDSENSTNVSRVQYVIGFICTIGASAGIGLLLSLIQMLFRKVFTKHTSSAVTDLAIYQSLVASCVVLIGLFASGEWETLPSEMRNYKLGKVSYVLTLASAAISWQVYTLGLVGLIFESSSVFSNSITAVGLPIVPVAAVIVFHDRMDASKIFSIILAICGFLSFVYQHYLDEKKLNTSHTSAVGDLHLPVEEGHTNIQSV.

The next 10 helical transmembrane spans lie at 42–62 (WLRV…ATIL), 74–94 (TYVV…FRFF), 110–130 (SPSF…VSAY), 131–151 (AYLS…LILA), 169–189 (FTPL…LLVV), 205–225 (VIGF…LSLI), 244–264 (LAIY…FASG), 286–306 (TLAS…GLIF), 312–332 (FSNS…VIVF), and 341–361 (IFSI…HYLD).

The protein belongs to the purine permeases (TC 2.A.7.14) family.

It is found in the membrane. The polypeptide is Probable purine permease 7 (PUP7) (Arabidopsis thaliana (Mouse-ear cress)).